A 428-amino-acid polypeptide reads, in one-letter code: D-amino acid dehydrogenase (428 aa).

Residue 3–17 (VVVLGSGVVGVTSAY) coordinates FAD.

The protein belongs to the DadA oxidoreductase family. The cofactor is FAD.

It carries out the reaction a D-alpha-amino acid + A + H2O = a 2-oxocarboxylate + AH2 + NH4(+). It participates in amino-acid degradation; D-alanine degradation; NH(3) and pyruvate from D-alanine: step 1/1. Functionally, oxidative deamination of D-amino acids. This is D-amino acid dehydrogenase from Paraburkholderia phymatum (strain DSM 17167 / CIP 108236 / LMG 21445 / STM815) (Burkholderia phymatum).